Here is a 205-residue protein sequence, read N- to C-terminus: High frequency lysogenization protein HflD homolog (205 aa).

This sequence belongs to the HflD family.

It localises to the cytoplasm. Its subcellular location is the cell inner membrane. This Shewanella sp. (strain ANA-3) protein is High frequency lysogenization protein HflD homolog.